The sequence spans 83 residues: Toxin CjTL8 (83 aa).

The N-terminal stretch at 1-20 (MSSAIKILALLMVLVALAQA) is a signal peptide. The propeptide occupies 21–44 (KPRKDYRAYPDFDDKSVILEDDKR). Phe-81 is subject to Phenylalanine amide.

In terms of processing, contains 3 disulfide bonds.

It localises to the secreted. The protein resides in the nematocyst. Its function is as follows. In vivo, induces immediate paralysis on shrimps (C.multidentata), followed by death when high doses are injected. No activity is observed when injected into fly larvae (M.domestica). The chain is Toxin CjTL8 from Epiactis japonica (Sea anemone).